Reading from the N-terminus, the 368-residue chain is N-succinylamino acid racemase (368 aa).

Residues S135 and 161 to 163 (KLK) each bind 2-succinylbenzoate. The active-site Proton donor is K163. D189 is a binding site for Mg(2+). N191 contacts 2-succinylbenzoate. Residues E214 and D239 each contribute to the Mg(2+) site. The active-site Proton acceptor is the K263. Residue I293 coordinates 2-succinylbenzoate.

It belongs to the mandelate racemase/muconate lactonizing enzyme family. MenC type 2 subfamily. Homooctamer. It depends on a divalent metal cation as a cofactor.

The catalysed reaction is N-acetyl-D-methionine = N-acetyl-L-methionine. The enzyme catalyses (1R,6R)-6-hydroxy-2-succinyl-cyclohexa-2,4-diene-1-carboxylate = 2-succinylbenzoate + H2O. Inhibited by EDTA and sulfhydryl reagents such as p-chloromercuribenzoic acid. Both OSBS and NAAAR activities are inhibited competitively by salicylhydroxamate. Its function is as follows. Acts as a N-succinylamino acid racemase (NSAR) that catalyzes the racemization of N-succinyl-phenylglycine and N-succinyl-methionine. Can catalyze the racemization of a broad range of N-acylamino acids, including N-acetyl-D/L-methionine, N-propionyl-D/L-methionine, N-butyryl-D/L-methionine and N-chloroacetyl-L-valine. Also converts 2-succinyl-6-hydroxy-2,4-cyclohexadiene-1-carboxylate (SHCHC) to 2-succinylbenzoate (OSB). Catalyzes both N-succinylamino acid racemization and OSB synthesis at equivalent rates. NSAR is probably the biological function of this enzyme. This Amycolatopsis sp protein is N-succinylamino acid racemase.